Here is a 159-residue protein sequence, read N- to C-terminus: Bacterioferritin (159 aa).

The Ferritin-like diiron domain occupies 1–145 (MQGDPDVLRL…TQLELMDKLG (145 aa)). Glutamate 18 and glutamate 51 together coordinate Fe cation. Methionine 52 is a heme b binding site. Residues histidine 54, glutamate 94, glutamate 127, and histidine 130 each coordinate Fe cation.

This sequence belongs to the bacterioferritin family. In terms of assembly, homooligomer of 24 subunits, arranged as 12 dimers, that are packed together to form an approximately spherical molecule with a central cavity, in which large amounts of iron can be deposited. Requires heme b as cofactor.

The catalysed reaction is 4 Fe(2+) + O2 + 4 H(+) = 4 Fe(3+) + 2 H2O. The enzyme catalyses Fe(2+)(in) = Fe(2+)(out). Iron-storage protein, whose ferroxidase center binds Fe(2+), oxidizes it using dioxygen to Fe(3+), and participates in the subsequent Fe(3+) oxide mineral core formation within the central cavity of the BFR protein shell. This is Bacterioferritin (bfr) from Mycobacterium bovis (strain ATCC BAA-935 / AF2122/97).